A 251-amino-acid chain; its full sequence is Probable transcriptional regulatory protein TGRD_462 (251 aa).

The protein belongs to the TACO1 family.

Its subcellular location is the cytoplasm. This is Probable transcriptional regulatory protein TGRD_462 from Endomicrobium trichonymphae.